Here is a 442-residue protein sequence, read N- to C-terminus: Protein PRRC1-B (442 aa).

The interval 1–24 (MMEESGIETTPPSTPPPSTIGTSV) is disordered.

Belongs to the PRRC1 family.

It is found in the golgi apparatus. In Xenopus laevis (African clawed frog), this protein is Protein PRRC1-B (prrc1-b).